Consider the following 919-residue polypeptide: Transcriptional regulatory protein EDS1 (919 aa).

Residues 1–54 are disordered; it reads MSHHVPNLYGTPIRDPHEHKRNSASMGEVNQSVSSRNCERGSEKGTKQRKKASR. Residues 23–36 are compositionally biased toward polar residues; sequence SASMGEVNQSVSSR. Basic and acidic residues predominate over residues 37-46; that stretch reads NCERGSEKGT. Positions 56–85 form a DNA-binding region, zn(2)-C6 fungal-type; sequence CDQCRRKRIKCRFDKHTGVCQGCLEVGEKC. A disordered region spans residues 297-338; the sequence is AGCPNKKLGTDGRSDKWDKNSTWKPVYRSSNPSHPSTEKNVS. Over residues 304–317 the composition is skewed to basic and acidic residues; the sequence is LGTDGRSDKWDKNS. The span at 318–338 shows a compositional bias: polar residues; that stretch reads TWKPVYRSSNPSHPSTEKNVS.

As to quaternary structure, binds DNA in a sequence-specific manner.

The protein resides in the nucleus. The sequence is that of Transcriptional regulatory protein EDS1 (EDS1) from Saccharomyces cerevisiae (strain Lalvin EC1118 / Prise de mousse) (Baker's yeast).